The following is a 179-amino-acid chain: uncharacterized protein (179 aa).

Residues 1–10 show a composition bias toward polar residues; sequence ATLSAGQPAS. 3 disordered regions span residues 1–35, 59–80, and 131–179; these read ATLS…RGKC, VRRN…PIVT, and ECPT…STCR. A compositionally biased stretch (basic residues) spans 23–33; the sequence is LHRHPAPKRRG. Positions 149-158 are enriched in basic residues; it reads TPSRVRRSRR.

This is an uncharacterized protein from Human cytomegalovirus (strain AD169) (HHV-5).